Reading from the N-terminus, the 242-residue chain is uncharacterized protein (242 aa).

8-15 (TGASGGIG) contacts NADP(+). S137 contributes to the substrate binding site. The Proton acceptor role is filled by Y150.

This sequence belongs to the short-chain dehydrogenases/reductases (SDR) family.

This is an uncharacterized protein from Bacillus subtilis (strain 168).